We begin with the raw amino-acid sequence, 754 residues long: Phosphatase and actin regulator 4B (754 aa).

A compositionally biased stretch (basic and acidic residues) spans 1 to 12 (MENRDDEVEHQH). 4 disordered regions span residues 1–38 (MENR…FSTL), 83–105 (KELP…KNGH), 120–625 (VHSP…SKEQ), and 637–666 (LTRR…DRQA). One copy of the RPEL 1 repeat lies at 61–86 (EVLERKMSMRRPRQELIEQGVLKELP). Composition is skewed to basic and acidic residues over residues 138–153 (PEDR…DHRG), 184–221 (HGED…EPDW), and 229–241 (SSVE…RESD). Composition is skewed to low complexity over residues 296–307 (SFCSSNSSSSSS) and 316–333 (SSAG…LTTS). 4 stretches are compositionally biased toward pro residues: residues 348 to 357 (KQPPMPPPKP), 381 to 390 (KPSPPMPPKR), 427 to 445 (LPPP…PSPP), and 460 to 478 (YPLP…PPED). Acidic residues-rich tracts occupy residues 483 to 503 (DEDD…DEEP), 541 to 557 (SEEE…ESDS), and 566 to 576 (DESDEDEEDDS). Positions 605 to 615 (QAPERQAKSEH) are enriched in basic and acidic residues. 2 RPEL repeats span residues 635 to 660 (TALT…QPKN) and 673 to 698 (RRLT…RFHE). Position 642 is a phosphoserine (S642).

It belongs to the phosphatase and actin regulator family. Binds ppp1ca and actin.

The protein resides in the cytoplasm. It localises to the cell projection. The protein localises to the lamellipodium. Regulator of protein phosphatase 1 (PP1) required for neural tube and optic fissure closure, and enteric neural crest cell (ENCCs) migration during development. Acts as an activator of PP1. During neural tube closure, localizes to the ventral neural tube and activates PP1, leading to down-regulate cell proliferation within cranial neural tissue and the neural retina. Also acts as a regulator of migration of enteric neural crest cells (ENCCs) by activating PP1, leading to repression of the integrin signaling through the rho/rock pathway. This chain is Phosphatase and actin regulator 4B (phactr4b), found in Danio rerio (Zebrafish).